We begin with the raw amino-acid sequence, 180 residues long: NADH-quinone oxidoreductase subunit I 1 (180 aa).

2 4Fe-4S ferredoxin-type domains span residues 50–80 and 90–119; these read LSRD…LQKT and EFFR…LTPD. Positions 60, 63, 66, 70, 99, 102, 105, and 109 each coordinate [4Fe-4S] cluster.

The protein belongs to the complex I 23 kDa subunit family. In terms of assembly, NDH-1 is composed of 14 different subunits. Subunits NuoA, H, J, K, L, M, N constitute the membrane sector of the complex. [4Fe-4S] cluster is required as a cofactor.

It localises to the cell inner membrane. It catalyses the reaction a quinone + NADH + 5 H(+)(in) = a quinol + NAD(+) + 4 H(+)(out). In terms of biological role, NDH-1 shuttles electrons from NADH, via FMN and iron-sulfur (Fe-S) centers, to quinones in the respiratory chain. The immediate electron acceptor for the enzyme in this species is believed to be ubiquinone. Couples the redox reaction to proton translocation (for every two electrons transferred, four hydrogen ions are translocated across the cytoplasmic membrane), and thus conserves the redox energy in a proton gradient. This chain is NADH-quinone oxidoreductase subunit I 1, found in Nitrosococcus oceani (strain ATCC 19707 / BCRC 17464 / JCM 30415 / NCIMB 11848 / C-107).